A 108-amino-acid chain; its full sequence is Glutaredoxin-1 (108 aa).

The Glutaredoxin domain occupies 3–106; it reads EEFVQQRLAN…DILSSIGVLR (104 aa). A disulfide bridge connects residues Cys-23 and Cys-26.

It belongs to the glutaredoxin family.

The protein localises to the virion. Its function is as follows. Has thioltransferase and dehydroascorbate reductase activities. The sequence is that of Glutaredoxin-1 (OPG075) from Ectromelia virus (strain Moscow) (ECTV).